We begin with the raw amino-acid sequence, 267 residues long: Outer membrane protein assembly factor BamD (267 aa).

The first 16 residues, 1-16 (MKKILLTVSLGLALSA), serve as a signal peptide directing secretion. A lipid anchor (N-palmitoyl cysteine) is attached at Cys17. Residue Cys17 is the site of S-diacylglycerol cysteine attachment.

This sequence belongs to the BamD family. In terms of assembly, part of the Bam complex.

It localises to the cell outer membrane. Its function is as follows. Part of the outer membrane protein assembly complex, which is involved in assembly and insertion of beta-barrel proteins into the outer membrane. Required for efficient transformation of Neisseria meningitidis by species-related DNA. The polypeptide is Outer membrane protein assembly factor BamD (Neisseria meningitidis serogroup A / serotype 4A (strain DSM 15465 / Z2491)).